The chain runs to 120 residues: Ribonuclease P protein component (120 aa).

This sequence belongs to the RnpA family. In terms of assembly, consists of a catalytic RNA component (M1 or rnpB) and a protein subunit.

The catalysed reaction is Endonucleolytic cleavage of RNA, removing 5'-extranucleotides from tRNA precursor.. In terms of biological role, RNaseP catalyzes the removal of the 5'-leader sequence from pre-tRNA to produce the mature 5'-terminus. It can also cleave other RNA substrates such as 4.5S RNA. The protein component plays an auxiliary but essential role in vivo by binding to the 5'-leader sequence and broadening the substrate specificity of the ribozyme. This is Ribonuclease P protein component from Chlamydia trachomatis serovar L2 (strain ATCC VR-902B / DSM 19102 / 434/Bu).